A 423-amino-acid polypeptide reads, in one-letter code: Core protease OPG082 (423 aa).

Catalysis depends on residues His241, Asp248, and Cys328.

Belongs to the peptidase C57 family.

The protein localises to the virion. Its function is as follows. Late protein responsible for processing most or all of the viral core and membrane proteins known to undergo morphogenesis-associated proteolysis. These proteolytic events are involved in the transformation of immature virions (IV) into mature virions (MV). Probably cleaves at least the OPG129, OPG136, OPG098, and OPG144 precursors preferentially at Ala-Gly-|-Ala motifs. Also seems to process Ala-Gly-|-Ser and Ala-Gly-|-Thr motifs. This is Core protease OPG082 (OPG083) from Homo sapiens (Human).